Reading from the N-terminus, the 56-residue chain is uncharacterized protein (56 aa).

A helical membrane pass occupies residues 33-53; sequence INIIYLAIMKIIMNIIMMIMI.

The protein localises to the host membrane. This is an uncharacterized protein from Bos taurus (Bovine).